The sequence spans 142 residues: Large ribosomal subunit protein uL11 (142 aa).

Belongs to the universal ribosomal protein uL11 family. As to quaternary structure, part of the ribosomal stalk of the 50S ribosomal subunit. Interacts with L10 and the large rRNA to form the base of the stalk. L10 forms an elongated spine to which L12 dimers bind in a sequential fashion forming a multimeric L10(L12)X complex. In terms of processing, one or more lysine residues are methylated.

Its function is as follows. Forms part of the ribosomal stalk which helps the ribosome interact with GTP-bound translation factors. The protein is Large ribosomal subunit protein uL11 of Yersinia pseudotuberculosis serotype O:1b (strain IP 31758).